The chain runs to 100 residues: uncharacterized protein (100 aa).

This is an uncharacterized protein from Caenorhabditis elegans.